We begin with the raw amino-acid sequence, 389 residues long: Alpha carbonic anhydrase 8 (389 aa).

Positions 1 to 22 are cleaved as a signal peptide; it reads MKISSLGWVLVLIFISITIVSS. The tract at residues 21-153 is disordered; that stretch reads SSAPAPKPPK…TKGNKGPAKW (133 aa). Positions 25–129 are enriched in pro residues; the sequence is APKPPKPKPA…PKPKPAPKPA (105 aa). The region spanning 138-374 is the Alpha-carbonic anhydrase domain; that stretch reads TEFSYETKGN…VNKRKVYLYK (237 aa). A disulfide bond links C163 and C324. N196 carries an N-linked (GlcNAc...) asparagine glycan. The active-site Proton acceptor is H204. The Zn(2+) site is built by H232, H234, and H251. 320 to 321 is a substrate binding site; sequence TA. N-linked (GlcNAc...) asparagine glycosylation occurs at N385.

This sequence belongs to the alpha-class carbonic anhydrase family. It depends on Zn(2+) as a cofactor. In terms of processing, N-glycosylated.

It is found in the plastid. Its subcellular location is the chloroplast stroma. The catalysed reaction is hydrogencarbonate + H(+) = CO2 + H2O. In terms of biological role, reversible hydration of carbon dioxide. The chain is Alpha carbonic anhydrase 8 (ACA8) from Arabidopsis thaliana (Mouse-ear cress).